Reading from the N-terminus, the 822-residue chain is Molybdenum cofactor sulfurase (822 aa).

At K245 the chain carries N6-(pyridoxal phosphate)lysine. C412 is a catalytic residue. One can recognise an MOSC domain in the interval 658-814 (LRLIRQSSND…LKTYSPIKAI (157 aa)).

The protein belongs to the class-V pyridoxal-phosphate-dependent aminotransferase family. MOCOS subfamily. It depends on pyridoxal 5'-phosphate as a cofactor.

It catalyses the reaction Mo-molybdopterin + L-cysteine + AH2 = thio-Mo-molybdopterin + L-alanine + A + H2O. The protein operates within cofactor biosynthesis; molybdopterin biosynthesis. Functionally, sulfurates the molybdenum cofactor. Sulfation of molybdenum is essential for xanthine dehydrogenase (XDH) and aldehyde oxidase (ADO) enzymes in which molybdenum cofactor is liganded by 1 oxygen and 1 sulfur atom in active form. The sequence is that of Molybdenum cofactor sulfurase from Bombyx mori (Silk moth).